We begin with the raw amino-acid sequence, 258 residues long: MLAKRIIPCLDVRDGQVVKGVQFRNHEIIGDIVPLAKRYAEEGADELVFYDITASSDGRVVDKSWVSRVAEVIDIPFCVAGGIKSLEDAAKILSFGADKISINSPALADPTLITRLADRFGVQCIVVGIDTWYDAETGKYHVNQYTGDESRTRVTQWETLDWVQEVQKRGAGEIVLNMMNQDGVRNGYDLKQLKKVREVCHVPLIASGGAGTMEHFLEAFRDADVDGALAASVFHKQIINIGELKAYLATQGVEIRIC.

Active-site residues include Asp11 and Asp130.

The protein belongs to the HisA/HisF family. As to quaternary structure, heterodimer of HisH and HisF.

The protein localises to the cytoplasm. It catalyses the reaction 5-[(5-phospho-1-deoxy-D-ribulos-1-ylimino)methylamino]-1-(5-phospho-beta-D-ribosyl)imidazole-4-carboxamide + L-glutamine = D-erythro-1-(imidazol-4-yl)glycerol 3-phosphate + 5-amino-1-(5-phospho-beta-D-ribosyl)imidazole-4-carboxamide + L-glutamate + H(+). It functions in the pathway amino-acid biosynthesis; L-histidine biosynthesis; L-histidine from 5-phospho-alpha-D-ribose 1-diphosphate: step 5/9. Its function is as follows. IGPS catalyzes the conversion of PRFAR and glutamine to IGP, AICAR and glutamate. The HisF subunit catalyzes the cyclization activity that produces IGP and AICAR from PRFAR using the ammonia provided by the HisH subunit. This is Imidazole glycerol phosphate synthase subunit HisF from Escherichia coli O6:K15:H31 (strain 536 / UPEC).